Consider the following 176-residue polypeptide: NAD(P)H-quinone oxidoreductase subunit J (176 aa).

Polar residues-rich tracts occupy residues 1 to 12 (MEKDSQATSSDT) and 20 to 30 (ISQSLSKDGIP). The interval 1–30 (MEKDSQATSSDTSIEKEGVISQSLSKDGIP) is disordered.

The protein belongs to the complex I 30 kDa subunit family. NDH-1 can be composed of about 15 different subunits; different subcomplexes with different compositions have been identified which probably have different functions.

It localises to the cellular thylakoid membrane. The catalysed reaction is a plastoquinone + NADH + (n+1) H(+)(in) = a plastoquinol + NAD(+) + n H(+)(out). It carries out the reaction a plastoquinone + NADPH + (n+1) H(+)(in) = a plastoquinol + NADP(+) + n H(+)(out). Functionally, NDH-1 shuttles electrons from an unknown electron donor, via FMN and iron-sulfur (Fe-S) centers, to quinones in the respiratory and/or the photosynthetic chain. The immediate electron acceptor for the enzyme in this species is believed to be plastoquinone. Couples the redox reaction to proton translocation, and thus conserves the redox energy in a proton gradient. Cyanobacterial NDH-1 also plays a role in inorganic carbon-concentration. This chain is NAD(P)H-quinone oxidoreductase subunit J, found in Prochlorococcus marinus (strain AS9601).